The sequence spans 55 residues: Large ribosomal subunit protein bL33 (55 aa).

Belongs to the bacterial ribosomal protein bL33 family.

The polypeptide is Large ribosomal subunit protein bL33 (Kocuria rhizophila (strain ATCC 9341 / DSM 348 / NBRC 103217 / DC2201)).